Consider the following 134-residue polypeptide: Large ribosomal subunit protein eL32 (134 aa).

This sequence belongs to the eukaryotic ribosomal protein eL32 family.

This chain is Large ribosomal subunit protein eL32 (RpL32), found in Drosophila bifasciata (Fruit fly).